A 279-amino-acid polypeptide reads, in one-letter code: uncharacterized protein (279 aa).

The interval 1 to 28 (MGLFGGGNSKSTSNQTTNNENTNIATQG) is disordered. The span at 9-23 (SKSTSNQTTNNENTN) shows a compositional bias: low complexity. Residues 256-273 (KTLMIGIVAVSAAVGLYA) form a helical membrane-spanning segment.

It localises to the host membrane. This is an uncharacterized protein from Pseudoalteromonas espejiana (Bacteriophage PM2).